A 327-amino-acid polypeptide reads, in one-letter code: Probable cell division protein WhiA (327 aa).

Residues 275 to 308 (SLEELGRLADPVMTKDAVAGRIRRLLSMADRKAK) constitute a DNA-binding region (H-T-H motif). The tract at residues 307–327 (AKTEGIPDTESAVTPELLEEA) is disordered.

This sequence belongs to the WhiA family.

Its function is as follows. Involved in cell division and chromosome segregation. This is Probable cell division protein WhiA from Mycobacteroides abscessus (strain ATCC 19977 / DSM 44196 / CCUG 20993 / CIP 104536 / JCM 13569 / NCTC 13031 / TMC 1543 / L948) (Mycobacterium abscessus).